The chain runs to 504 residues: Patatin-like phospholipase domain-containing protein 2 (504 aa).

Residues 1 to 8 (MFPREKTW) lie on the Cytoplasmic side of the membrane. The chain crosses the membrane as a helical span at residues 9–29 (NISFAGCGFLGVYYVGVASCL). The region spanning 10-179 (ISFAGCGFLG…SDNLPLYELK (170 aa)) is the PNPLA domain. A GXGXXG motif is present at residues 14–19 (GCGFLG). Residues 30–42 (REHAPFLVANATH) are Extracellular-facing. The N-linked (GlcNAc...) asparagine glycan is linked to asparagine 39. A helical membrane pass occupies residues 43–63 (IYGASAGALTATALVTGVCLG). Residues 45–49 (GASAG) carry the GXSXG motif. Catalysis depends on serine 47, which acts as the Nucleophile. Residues 64–137 (EAGAKFIEVS…IISHFNSKDE (74 aa)) are Cytoplasmic-facing. Residue lysine 92 forms a Glycyl lysine isopeptide (Lys-Gly) (interchain with G-Cter in ubiquitin) linkage. The chain crosses the membrane as a helical span at residues 138-158 (LIQANVCSGFIPVYCGLIPPS). Topologically, residues 159 to 329 (LQGVRYVDGG…TTLSNMLPVR (171 aa)) are extracellular. Aspartate 166 serves as the catalytic Proton acceptor. The short motif at 166–168 (DGG) is the DGA/G element. Residues 330–350 (LATAMMVPYTLPLESALSFTI) form a helical membrane-spanning segment. Residues 351–504 (RLLEWLPDVP…ARPVIGALGL (154 aa)) lie on the Cytoplasmic side of the membrane. Serine 372 carries the phosphoserine; in vitro modification. Serine 404 carries the post-translational modification Phosphoserine; by PKA and FAM20C. Serine 428 bears the Phosphoserine mark. The disordered stretch occupies residues 463 to 492 (APADPAPAPADPASPQHQLAGPAPLLSTPA).

Interacts with ABHD5; this association stimulates PNPLA2 triglyceride hydrolase activity. Interacts with SERPINF1; this interaction stimulates the phospholipase A2 activity of PNPLA2. Despite a colocalization in lipid droplets, it probably does not interact with PLIN. Interacts with PLIN5; prevents interaction with ABHD5. Interacts with FAF2. In terms of processing, phosphorylation at Ser-404 by PKA is increased during fasting and moderate intensity exercise, and moderately increases lipolytic activity. Phosphorylation at Ser-404 is increased upon beta-adrenergic stimulation. Ubiquitinated by PEX2 in response to reactive oxygen species (ROS), leading to its degradation. Ubiquitination is stimulated by LDAH. Highest expression in adipose tissue. Also detected in heart, skeletal muscle, and portions of the gastrointestinal tract. Detected in normal retina and retinoblastoma cells. Detected in retinal pigment epithelium and, at lower intensity, in the inner segments of photoreceptors and in the ganglion cell layer of the neural retina (at protein level).

It is found in the lipid droplet. Its subcellular location is the cell membrane. It localises to the cytoplasm. It carries out the reaction a triacylglycerol + H2O = a diacylglycerol + a fatty acid + H(+). The catalysed reaction is a triacylglycerol + H2O = a 1,2-diacylglycerol + a fatty acid + H(+). It catalyses the reaction a triacylglycerol + H2O = a 1,3-diacylglycerol + a fatty acid + H(+). The enzyme catalyses a triacyl-sn-glycerol + H2O = a 1,3-diacyl-sn-glycerol + a fatty acid + H(+). It carries out the reaction a triacyl-sn-glycerol + H2O = a 2,3-diacyl-sn-glycerol + a fatty acid + H(+). The catalysed reaction is a 1-acylglycerol + a 1,3-diacylglycerol = a triacylglycerol + glycerol. It catalyses the reaction a 1-acylglycerol + a 1,2-diacylglycerol = a triacylglycerol + glycerol. The enzyme catalyses 2 a 1-acylglycerol = a 1,2-diacylglycerol + glycerol. It carries out the reaction a triacylglycerol + all-trans-retinol = an all-trans-retinyl ester + a diacylglycerol. The catalysed reaction is 1,2-di-(9Z-octadecenoyl)-glycerol + (9Z)-octadecenoate + H(+) = 1,2,3-tri-(9Z-octadecenoyl)-glycerol + H2O. It catalyses the reaction 1,2,3-tri-(9Z-octadecenoyl)-glycerol + H2O = 1,3-di-(9Z-octadecenoyl)-glycerol + (9Z)-octadecenoate + H(+). The enzyme catalyses 1-(9Z-octadecenoyl)-glycerol + 1,3-di-(9Z-octadecenoyl)-glycerol = 1,2,3-tri-(9Z-octadecenoyl)-glycerol + glycerol. It carries out the reaction 1-(9Z-octadecenoyl)-glycerol + 1,2-di-(9Z-octadecenoyl)-glycerol = 1,2,3-tri-(9Z-octadecenoyl)-glycerol + glycerol. The catalysed reaction is 2 1-(9Z-octadecenoyl)-glycerol = 1,2-di-(9Z-octadecenoyl)-glycerol + glycerol. It catalyses the reaction 1,2,3-tri-(9Z-octadecenoyl)-glycerol + all-trans-retinol = all-trans-retinyl 9Z-octadecenoate + di-(9Z)-octadecenoylglycerol. The enzyme catalyses 1,2,3-tri-(9Z)-hexadecenoylglycerol + H2O = 1,3-di-(9Z)-hexadecenoylglycerol + (9Z)-hexadecenoate + H(+). It carries out the reaction 1,2,3-tri-(9Z,12Z)-octadecadienoylglycerol + H2O = 1,3-di-(9Z,12Z)-octadecadienoylglycerol + (9Z,12Z)-octadecadienoate + H(+). The catalysed reaction is 1,2,3-tri-(9Z,12Z,15Z)-octadecatrienoylglycerol + H2O = 1,3-di-(9Z,12Z,15Z)-octadecatrienoylglycerol + (9Z,12Z,15Z)-octadecatrienoate + H(+). It catalyses the reaction 1,3-di-(9Z)-octadecenoyl-2-hexadecanoylglycerol + H2O = 1,3-di-(9Z-octadecenoyl)-glycerol + hexadecanoate + H(+). The enzyme catalyses 1,2-di-(9Z)-octadecenoyl-3-hexadecanoyl-sn-glycerol + H2O = 1-(9Z)-octadecenoyl-3-hexadecanoyl-sn-glycerol + (9Z)-octadecenoate + H(+). It carries out the reaction 1-hexadecanoyl-2,3-di-(9Z)-octadecenoyl-sn-glycerol + H2O = 1-hexadecanoyl-3-(9Z)-octadecenoyl-sn-glycerol + (9Z)-octadecenoate + H(+). The catalysed reaction is 1,2,3-tri-(9Z-octadecenoyl)-glycerol + H2O = 2,3-di-(9Z)-octadecenoyl-sn-glycerol + (9Z)-octadecenoate + H(+). It catalyses the reaction 1,2,3-tri-(9Z)-hexadecenoylglycerol + H2O = 2,3-di-(9Z)-hexadecenoyl-sn-glycerol + (9Z)-hexadecenoate + H(+). The enzyme catalyses 1,2,3-tri-(9Z,12Z)-octadecadienoylglycerol + H2O = 2,3-di-(9Z,12Z)-octadecadienoyl-sn-glycerol + (9Z,12Z)-octadecadienoate + H(+). It carries out the reaction 1,2,3-tri-(9Z,12Z,15Z)-octadecatrienoylglycerol + H2O = 2,3-di-(9Z,12Z,15Z)-octadecatrienoyl-sn-glycerol + (9Z,12Z,15Z)-octadecatrienoate + H(+). The catalysed reaction is 1,3-di-(9Z)-octadecenoyl-2-hexadecanoylglycerol + H2O = 2-hexadecanoyl-3-(9Z)-octadecenoyl-sn-glycerol + (9Z)-octadecenoate + H(+). It catalyses the reaction 1-hexadecanoyl-2,3-di-(9Z)-octadecenoyl-sn-glycerol + H2O = 2,3-di-(9Z)-octadecenoyl-sn-glycerol + hexadecanoate + H(+). The enzyme catalyses 1,2-di-(9Z)-octadecenoyl-3-hexadecanoyl-sn-glycerol + H2O = 2-(9Z-octadecenoyl)-3-hexadecanoyl-sn-glycerol + (9Z)-octadecenoate + H(+). It carries out the reaction a 1,2-diacyl-sn-glycero-3-phosphocholine + H2O = a 1-acyl-sn-glycero-3-phosphocholine + a fatty acid + H(+). The catalysed reaction is 1,2,3-tri-(9Z-octadecenoyl)-glycerol + 9-hydroxy-octadecanoate = 9-(9Z-octadecenoyloxy)-octadecanoate + 2,3-di-(9Z)-octadecenoyl-sn-glycerol. It catalyses the reaction 1-hexadecanoyl-2,3-di-(9Z)-octadecenoyl-sn-glycerol + 9-hydroxy-octadecanoate = 9-hexadecanoyloxy-octadecanoate + 2,3-di-(9Z)-octadecenoyl-sn-glycerol. The enzyme catalyses 1,2,3-tri-(10Z)-heptadecenoylglycerol + 9-hydroxy-octadecanoate = 2,3-di-(10Z-heptadecenoyl)-sn-glycerol + 9-(10Z-heptadecenoyloxy)-octadecanoate. It carries out the reaction 1,2,3-tri-(9Z,12Z)-octadecadienoylglycerol + 9-hydroxy-octadecanoate = 2,3-di-(9Z,12Z)-octadecadienoyl-sn-glycerol + 9-(9Z,12Z-octadecadienoyloxy)-octadecanoate. The catalysed reaction is 1,2,3-tri-(9Z)-hexadecenoylglycerol + 9-hydroxy-octadecanoate = 2,3-di-(9Z)-hexadecenoyl-sn-glycerol + 9-(9Z-hexadecenoyloxy)-octadecanoate. It catalyses the reaction 9-hydroxy-octadecanoate + 1,2-di-(9Z-octadecenoyl)-sn-glycerol = 9-(9Z-octadecenoyloxy)-octadecanoate + 2-(9Z-octadecenoyl)-glycerol. The enzyme catalyses 1-hexadecanoyl-2,3-di-(9Z)-octadecenoyl-sn-glycerol + 9-hydroxy-octadecanoate = 1-hexadecanoyl-3-(9Z)-octadecenoyl-sn-glycerol + 9-(9Z-octadecenoyloxy)-octadecanoate. It participates in glycerolipid metabolism; triacylglycerol degradation. With respect to regulation, the triglyceride lipase activity is inhibited by BEL ((E)-6-(bromomethylene)-3-(1-naphthalenyl)-2H-tetrahydropyran-2-one), a suicide substrate inhibitor. No differences in the acylglycerol transacylase was detected in the presence or absence of ATP. Its function is as follows. Catalyzes the initial step in triglyceride hydrolysis in adipocyte and non-adipocyte lipid droplets. Exhibits a strong preference for the hydrolysis of long-chain fatty acid esters at the sn-2 position of the glycerol backbone and acts coordinately with LIPE/HLS and DGAT2 within the lipolytic cascade. Also possesses acylglycerol transacylase and phospholipase A2 activities. Transfers fatty acid from triglyceride to retinol, hydrolyzes retinylesters, and generates 1,3-diacylglycerol from triglycerides. Regulates adiposome size and may be involved in the degradation of adiposomes. Catalyzes the formation of an ester bond between hydroxy fatty acids and fatty acids derived from triglycerides or diglycerides to generate fatty acid esters of hydroxy fatty acids (FAHFAs) in adipocytes. Acts antagonistically with LDAH in regulation of cellular lipid stores. Inhibits LDAH-stimulated lipid droplet fusion. May play an important role in energy homeostasis. May play a role in the response of the organism to starvation, enhancing hydrolysis of triglycerides and providing free fatty acids to other tissues to be oxidized in situations of energy depletion. The sequence is that of Patatin-like phospholipase domain-containing protein 2 from Homo sapiens (Human).